Here is a 187-residue protein sequence, read N- to C-terminus: Large ribosomal subunit protein uL10 (187 aa).

The protein belongs to the universal ribosomal protein uL10 family. Part of the ribosomal stalk of the 50S ribosomal subunit. The N-terminus interacts with L11 and the large rRNA to form the base of the stalk. The C-terminus forms an elongated spine to which L12 dimers bind in a sequential fashion forming a multimeric L10(L12)X complex.

Its function is as follows. Forms part of the ribosomal stalk, playing a central role in the interaction of the ribosome with GTP-bound translation factors. This is Large ribosomal subunit protein uL10 from Synechococcus sp. (strain JA-2-3B'a(2-13)) (Cyanobacteria bacterium Yellowstone B-Prime).